Reading from the N-terminus, the 110-residue chain is Progonadoliberin-2 (110 aa).

The signal sequence occupies residues 1–26 (MASIGQGLVLLLLLLLLTAQPGPLKA). The segment at 25-85 (KAQHWSHGWY…KALAPPEDTV (61 aa)) is disordered. Glycine 36 bears the Glycine amide mark.

This sequence belongs to the GnRH family. As to expression, midbrain.

It is found in the secreted. In terms of biological role, stimulates the secretion of gonadotropins; it stimulates the secretion of both luteinizing and follicle-stimulating hormones. The sequence is that of Progonadoliberin-2 (GNRH2) from Suncus murinus (Asian house shrew).